Reading from the N-terminus, the 1748-residue chain is Flagellar attachment zone protein 1 (1748 aa).

3 coiled-coil regions span residues 613–657 (REQE…KLQK), 684–864 (VTLD…HKVR), and 903–1663 (NDHM…SALE). Tandem repeats lie at residues 1012-1025 (EELE…EKLA), 1026-1039 (EELE…EKLA), 1040-1053 (EELE…EKLA), 1054-1067 (EALD…EKLA), 1068-1081 (EELE…EKLA), 1082-1095 (EELE…EKLA), 1096-1109 (EELE…EKLA), 1110-1123 (EELE…EKLA), 1124-1137 (EELE…EKLA), 1138-1151 (EELE…EKLA), 1152-1165 (EALD…EKLA), 1166-1179 (EELD…EKLA), 1180-1193 (EELE…EKLA), 1194-1207 (EELE…EKLA), 1208-1221 (EELE…EKLA), 1222-1235 (EELE…EKLA), 1236-1249 (EELE…EKLA), 1250-1263 (EELE…EKLA), 1264-1277 (EELE…EKLA), 1278-1291 (EELE…EKLA), 1292-1305 (EELE…EKLA), 1306-1319 (EELE…EKLA), 1320-1333 (EELE…EKLA), 1334-1347 (EELE…EKLA), 1348-1361 (EELE…EKLA), 1362-1375 (EELE…EKLA), 1376-1389 (EELE…EKLA), 1390-1403 (EELE…EKLA), 1404-1417 (EELE…EKLA), 1418-1431 (EELE…EKLA), 1432-1445 (EELE…EKLA), 1446-1459 (EELE…EKLA), 1460-1473 (EELE…EKLA), 1474-1487 (EELE…EKLA), 1488-1501 (EELE…EKLA), 1502-1515 (EELE…EKLA), 1516-1529 (EELE…EKLA), 1530-1543 (EELE…EKLA), 1544-1557 (EELE…EKLA), 1558-1571 (EELE…EKLA), and 1572-1585 (EELE…KRLA). The segment at 1012–1529 (EELELKAAEN…LKAAENEKLA (518 aa)) is 41 X 14 AA tandem repeats of E-E-L-E-L-K-[VA]-A-E-N-E-K-L-A.

The protein resides in the cell projection. Its subcellular location is the cilium. It localises to the flagellum. In terms of biological role, a component of FAZ filament that is required for correct FAZ assembly and attachment. Not essential for new flagellum growth. In Trypanosoma brucei gambiense (strain MHOM/CI/86/DAL972), this protein is Flagellar attachment zone protein 1.